Here is a 484-residue protein sequence, read N- to C-terminus: Ribosomal RNA small subunit methyltransferase F (484 aa).

Residues 126-132, Glu-150, Asp-177, and Asp-195 contribute to the S-adenosyl-L-methionine site; that span reads AAAPGSK. Cys-248 acts as the Nucleophile in catalysis.

This sequence belongs to the class I-like SAM-binding methyltransferase superfamily. RsmB/NOP family.

The protein resides in the cytoplasm. It carries out the reaction cytidine(1407) in 16S rRNA + S-adenosyl-L-methionine = 5-methylcytidine(1407) in 16S rRNA + S-adenosyl-L-homocysteine + H(+). In terms of biological role, specifically methylates the cytosine at position 1407 (m5C1407) of 16S rRNA. In Pectobacterium carotovorum subsp. carotovorum (strain PC1), this protein is Ribosomal RNA small subunit methyltransferase F.